Here is a 76-residue protein sequence, read N- to C-terminus: Protein CsbA (76 aa).

Topologically, residues 1–5 are extracellular; it reads MITKA. A helical membrane pass occupies residues 6 to 22; it reads VFALFFPFMLVVLFTRV. Over 23-27 the chain is Cytoplasmic; it reads TFNHY. Residues 28–44 form a helical membrane-spanning segment; sequence VAIALTAALLFASYLKG. Over 45–49 the chain is Extracellular; sequence YTETY. Residues 50-66 traverse the membrane as a helical segment; sequence FIVGLDVVSLVAGGLYM. At 67-76 the chain is on the cytoplasmic side; sequence AKKAAEKKEE.

Its subcellular location is the cell membrane. This is Protein CsbA (csbA) from Bacillus subtilis (strain 168).